The sequence spans 254 residues: CRISPR-associated endonuclease Cas1 (254 aa).

Positions 78, 146, and 161 each coordinate Mn(2+).

Belongs to the CRISPR-associated endonuclease Cas1 family. As to quaternary structure, homodimer, forms a heterotetramer with a Cas2 homodimer. It depends on Mg(2+) as a cofactor. Mn(2+) serves as cofactor.

Its function is as follows. CRISPR (clustered regularly interspaced short palindromic repeat), is an adaptive immune system that provides protection against mobile genetic elements (viruses, transposable elements and conjugative plasmids). CRISPR clusters contain spacers, sequences complementary to antecedent mobile elements, and target invading nucleic acids. CRISPR clusters are transcribed and processed into CRISPR RNA (crRNA). Acts as a dsDNA endonuclease. Involved in the integration of spacer DNA into the CRISPR cassette. The polypeptide is CRISPR-associated endonuclease Cas1 (Leptospira interrogans serogroup Icterohaemorrhagiae serovar Lai (strain 56601)).